Reading from the N-terminus, the 512-residue chain is Hyaluronidase PH-20 (512 aa).

An N-terminal signal peptide occupies residues 1–35 (MGELRFKHLFWGSFVESGGTFQTVLIFLLIPCSLT). Residue N46 is glycosylated (N-linked (GlcNAc...) asparagine). Intrachain disulfides connect C60–C351 and C223–C237. E147 (proton donor) is an active-site residue. The N-linked (GlcNAc...) asparagine glycan is linked to N165. Residues N293 and N368 are each glycosylated (N-linked (GlcNAc...) asparagine). Intrachain disulfides connect C376-C387, C381-C435, and C437-C464.

Belongs to the glycosyl hydrolase 56 family.

It localises to the cell membrane. The catalysed reaction is Random hydrolysis of (1-&gt;4)-linkages between N-acetyl-beta-D-glucosamine and D-glucuronate residues in hyaluronate.. Involved in sperm-egg adhesion. Upon fertilization sperm must first penetrate a layer of cumulus cells that surrounds the egg before reaching the zona pellucida. The cumulus cells are embedded in a matrix containing hyaluronic acid which is formed prior to ovulation. This protein aids in penetrating the layer of cumulus cells by digesting hyaluronic acid. The protein is Hyaluronidase PH-20 (Spam1) of Mus musculus (Mouse).